Consider the following 122-residue polypeptide: Large ribosomal subunit protein uL14 (122 aa).

This sequence belongs to the universal ribosomal protein uL14 family. As to quaternary structure, part of the 50S ribosomal subunit. Forms a cluster with proteins L3 and L19. In the 70S ribosome, L14 and L19 interact and together make contacts with the 16S rRNA in bridges B5 and B8.

Its function is as follows. Binds to 23S rRNA. Forms part of two intersubunit bridges in the 70S ribosome. The chain is Large ribosomal subunit protein uL14 from Kosmotoga olearia (strain ATCC BAA-1733 / DSM 21960 / TBF 19.5.1).